Consider the following 1356-residue polypeptide: Probable aldehyde oxidase 3 (1356 aa).

In terms of domain architecture, 2Fe-2S ferredoxin-type spans 10–97 (RAVVVAVNGE…HCAVTTSEGI (88 aa)). Residues C49, C54, C57, and C79 each contribute to the [2Fe-2S] cluster site. The 193-residue stretch at 245–437 (VVVTGDGWFH…TFQTFRAAPR (193 aa)) folds into the FAD-binding PCMH-type domain. A disordered region spans residues 552–576 (NGSFTNGTANGIVDSSPEKHSNVDS).

It belongs to the xanthine dehydrogenase family. Aldehyde oxidases (AO) are homodimers and heterodimers of AO subunits. [2Fe-2S] cluster is required as a cofactor. Requires FAD as cofactor. It depends on Mo-molybdopterin as a cofactor.

It catalyses the reaction an aldehyde + O2 + H2O = a carboxylate + H2O2 + H(+). This chain is Probable aldehyde oxidase 3, found in Oryza sativa subsp. japonica (Rice).